The sequence spans 95 residues: Small ribosomal subunit protein uS19 (95 aa).

A disordered region spans residues 76-95; it reads PTRRFGGHADKKAKKGELKK. Residues 82–95 show a composition bias toward basic and acidic residues; the sequence is GHADKKAKKGELKK.

It belongs to the universal ribosomal protein uS19 family.

In terms of biological role, protein S19 forms a complex with S13 that binds strongly to the 16S ribosomal RNA. This chain is Small ribosomal subunit protein uS19, found in Thermotoga neapolitana (strain ATCC 49049 / DSM 4359 / NBRC 107923 / NS-E).